The following is a 363-amino-acid chain: tRNA-specific 2-thiouridylase MnmA (363 aa).

Residues 8–15 (AMSGGVDS) and L34 contribute to the ATP site. C103 serves as the catalytic Nucleophile. C103 and C195 are disulfide-bonded. G127 provides a ligand contact to ATP. The segment at 145-147 (KDQ) is interaction with tRNA. C195 functions as the Cysteine persulfide intermediate in the catalytic mechanism.

It belongs to the MnmA/TRMU family.

It localises to the cytoplasm. The enzyme catalyses S-sulfanyl-L-cysteinyl-[protein] + uridine(34) in tRNA + AH2 + ATP = 2-thiouridine(34) in tRNA + L-cysteinyl-[protein] + A + AMP + diphosphate + H(+). Functionally, catalyzes the 2-thiolation of uridine at the wobble position (U34) of tRNA, leading to the formation of s(2)U34. In Thermobifida fusca (strain YX), this protein is tRNA-specific 2-thiouridylase MnmA.